A 198-amino-acid chain; its full sequence is Endonuclease V (198 aa).

Residues Asp38 and Asp101 each contribute to the Mg(2+) site.

This sequence belongs to the endonuclease V family. Mg(2+) is required as a cofactor.

It is found in the cytoplasm. The enzyme catalyses Endonucleolytic cleavage at apurinic or apyrimidinic sites to products with a 5'-phosphate.. Functionally, DNA repair enzyme involved in the repair of deaminated bases. Selectively cleaves double-stranded DNA at the second phosphodiester bond 3' to a deoxyinosine leaving behind the intact lesion on the nicked DNA. This is Endonuclease V from Saccharolobus islandicus (strain Y.N.15.51 / Yellowstone #2) (Sulfolobus islandicus).